Consider the following 95-residue polypeptide: MGSGVRVRVIVKGIVQGVGFRSFIRRHATALGLTGYVRNLPDGESVEIVVSGPEDRVNELIKLAKRGPPAAVVDSVEVEPYEGVEDFTGFSVRYD.

Residues 6 to 94 form the Acylphosphatase-like domain; that stretch reads RVRVIVKGIV…EDFTGFSVRY (89 aa). Active-site residues include Arg21 and Asn39.

This sequence belongs to the acylphosphatase family.

It carries out the reaction an acyl phosphate + H2O = a carboxylate + phosphate + H(+). The sequence is that of Acylphosphatase (acyP) from Caldivirga maquilingensis (strain ATCC 700844 / DSM 13496 / JCM 10307 / IC-167).